The sequence spans 430 residues: Chromatin assembly factor 1 p55 subunit (430 aa).

Phosphoserine occurs at positions 11 and 100. WD repeat units follow at residues 126–159, 179–210, 229–260, 275–306, 319–350, and 376–407; these read NHEG…FDYT, GHQK…CLWD, GHTA…MIWD, AHTA…ALWD, SHKD…HVWD, and GHTA…QVWQ.

Belongs to the WD repeat RBAP46/RBAP48/MSI1 family. Probably binds directly to helix 1 of the histone fold of histone H4, a region that is not accessible when H4 is in chromatin. Self associates. Associates with chromatin. Component of the CAF-1 complex, composed of Caf1-55, Caf1-105 and Caf1-180; within the CAF-1 complex, Caf1-180 interacts directly with both Caf1-55 and Caf1-105. Component of the NuRD complex, composed of at least Caf1-55, Mi-2, MTA1-like and HDAC1/Rpd3. Within the NuRD complex, Caf1-55 may interact directly with Mi-2, MTA1-like and HDAC1/Rpd3. The NuRD complex may also associate with the methyl-DNA binding protein MBD-like via Caf1-55 and Mi-2. Component of the NURF complex, composed of Caf1-55, E(bx), Nurf-38 and Iswi. Component of the polycomb repressive complex 2 (PRC2, also known as the Esc/E(Z) complex), composed of Caf1-55, esc, E(z), Su(z)12, and possibly pho. PRC2 associates with the accessory components Jarid2 and jing to form the PRC2 Jarid2-jing variant (PRC2.2). PRC2 may also associate with Pcl and HDAC1/Rpd3 during early embryogenesis. Interacts with Rbf and Rbf2. Component of the DREAM complex at least composed of Myb, Caf1-55, mip40, mip120, mip130, E2f2, Dp, Rbf, Rbf2, lin-52, HDAC1/Rpd3 and l(3)mbt.

It localises to the nucleus. Its function is as follows. Core histone-binding subunit that may target chromatin assembly factors, chromatin remodeling factors and histone deacetylases to their histone substrates in a manner that is regulated by nucleosomal DNA. Component of several complexes which regulate chromatin metabolism. These include the chromatin assembly factor 1 (CAF-1) complex, which is required for chromatin assembly following DNA replication and DNA repair; the nucleosome remodeling and deacetylase complex (the NuRD complex), which promotes transcriptional repression by histone deacetylation and nucleosome remodeling; the nucleosome remodeling factor (NURF) complex, which catalyzes ATP-dependent nucleosome sliding and facilitates transcription of chromatin; and the polycomb group (PcG) repressor complex ESC-E(Z), which promotes repression of homeotic genes during development. Also required for transcriptional repression of E2F target genes by E2f2 and Rbf or Rbf2. The sequence is that of Chromatin assembly factor 1 p55 subunit from Drosophila melanogaster (Fruit fly).